Here is a 207-residue protein sequence, read N- to C-terminus: Claudin-11 (207 aa).

Position 1 (Met-1) is a topological domain, cytoplasmic. The helical transmembrane segment at 2-22 threads the bilayer; that stretch reads VATCLQVVGFVTSFVGWIGII. At 23 to 82 the chain is on the extracellular side; the sequence is VTTSTNDWVVTCSYTIPTCRKMDELGSKGLWADCVMATGLYHCKPLVDILILPGYVQACR. Residues 83-103 traverse the membrane as a helical segment; it reads ALMIAASVLGLPAILLLLTVL. At 104 to 122 the chain is on the cytoplasmic side; that stretch reads PCIRMGHEPGVAKYRRAQL. Residues 123–143 traverse the membrane as a helical segment; sequence AGVLLILLALCAIVATIWFPV. The Extracellular segment spans residues 144-157; it reads CAHREITIVSFGYS. A helical transmembrane segment spans residues 158-178; it reads LYAGWIGAVMCLVGGCVIVCC. Over 179–207 the chain is Cytoplasmic; that stretch reads SGDAQSFGENRFYYSSGSSSPTHAKSAHV. Phosphoserine is present on residues Ser-193, Ser-194, Ser-197, and Ser-198.

This sequence belongs to the claudin family. Interacts with tetraspanin-3/TSPAN3. Interacts with OCLN.

The protein localises to the cell junction. It is found in the tight junction. It localises to the cell membrane. Functionally, plays a major role in tight junction-specific obliteration of the intercellular space, through calcium-independent cell-adhesion activity. The protein is Claudin-11 (Cldn11) of Mus musculus (Mouse).